The sequence spans 258 residues: UPF0246 protein YaaA (258 aa).

Belongs to the UPF0246 family.

The sequence is that of UPF0246 protein YaaA from Escherichia coli (strain K12 / MC4100 / BW2952).